The sequence spans 310 residues: D-alanyl-D-alanine endopeptidase (310 aa).

An N-terminal signal peptide occupies residues 1-23 (MRNRLLSLVTLFLSLSVATAVSA). The active-site Acyl-ester intermediate is serine 66. Lysine 69 serves as the catalytic Proton acceptor. Serine 123 is a catalytic residue. A substrate-binding site is contributed by lysine 230.

The protein belongs to the peptidase S11 family.

The protein localises to the periplasm. Its function is as follows. Cell wall formation. The chain is D-alanyl-D-alanine endopeptidase (pbpG) from Pseudomonas aeruginosa (strain ATCC 15692 / DSM 22644 / CIP 104116 / JCM 14847 / LMG 12228 / 1C / PRS 101 / PAO1).